Here is a 315-residue protein sequence, read N- to C-terminus: Ferrochelatase (315 aa).

Residues His-193 and Glu-273 each coordinate Fe cation.

It belongs to the ferrochelatase family.

It localises to the cytoplasm. The enzyme catalyses heme b + 2 H(+) = protoporphyrin IX + Fe(2+). The protein operates within porphyrin-containing compound metabolism; protoheme biosynthesis; protoheme from protoporphyrin-IX: step 1/1. In terms of biological role, catalyzes the ferrous insertion into protoporphyrin IX. The polypeptide is Ferrochelatase (Wolbachia sp. subsp. Drosophila simulans (strain wRi)).